We begin with the raw amino-acid sequence, 375 residues long: Growth/differentiation factor 8 (375 aa).

The first 18 residues, 1–18, serve as a signal peptide directing secretion; it reads MQRLQICVYIYLFVLIVA. Positions 19 to 266 are excised as a propeptide; that stretch reads GPVDLSENSE…VTDTPKRSRR (248 aa). Residue asparagine 71 is glycosylated (N-linked (GlcNAc...) asparagine). 4 cysteine pairs are disulfide-bonded: cysteine 272/cysteine 282, cysteine 281/cysteine 340, cysteine 309/cysteine 372, and cysteine 313/cysteine 374.

Belongs to the TGF-beta family. As to quaternary structure, homodimer; disulfide-linked. Interacts with WFIKKN2, leading to inhibit its activity. Interacts with FSTL3. Post-translationally, synthesized as large precursor molecule that undergoes proteolytic cleavage to generate an N-terminal propeptide and a disulfide linked C-terminal dimer, which is the biologically active molecule. The circulating form consists of a latent complex of the C-terminal dimer and other proteins, including its propeptide, which maintain the C-terminal dimer in a latent, inactive state. Ligand activation requires additional cleavage of the prodomain by a tolloid-like metalloproteinase.

The protein resides in the secreted. Its function is as follows. Acts specifically as a negative regulator of skeletal muscle growth. The protein is Growth/differentiation factor 8 (MSTN) of Canis lupus familiaris (Dog).